Here is a 479-residue protein sequence, read N- to C-terminus: Ribosomal RNA small subunit methyltransferase F (479 aa).

Residues 125-131 (AAAPGSK), Glu-149, Asp-176, and Asp-194 contribute to the S-adenosyl-L-methionine site. The active-site Nucleophile is Cys-247.

It belongs to the class I-like SAM-binding methyltransferase superfamily. RsmB/NOP family.

Its subcellular location is the cytoplasm. It carries out the reaction cytidine(1407) in 16S rRNA + S-adenosyl-L-methionine = 5-methylcytidine(1407) in 16S rRNA + S-adenosyl-L-homocysteine + H(+). In terms of biological role, specifically methylates the cytosine at position 1407 (m5C1407) of 16S rRNA. The protein is Ribosomal RNA small subunit methyltransferase F of Escherichia coli (strain SE11).